A 446-amino-acid polypeptide reads, in one-letter code: Phosphoglucosamine mutase (446 aa).

The Phosphoserine intermediate role is filled by Ser101. Mg(2+) contacts are provided by Ser101, Asp240, Asp242, and Asp244. Ser101 bears the Phosphoserine mark.

The protein belongs to the phosphohexose mutase family. Mg(2+) is required as a cofactor. Post-translationally, activated by phosphorylation.

The catalysed reaction is alpha-D-glucosamine 1-phosphate = D-glucosamine 6-phosphate. Functionally, catalyzes the conversion of glucosamine-6-phosphate to glucosamine-1-phosphate. The chain is Phosphoglucosamine mutase from Pseudomonas entomophila (strain L48).